The sequence spans 365 residues: Chaperone protein DnaJ (365 aa).

A J domain is found at 4-70; the sequence is DYYKILGVDR…EKRRIYDQTG (67 aa). The CR-type zinc-finger motif lies at 139–220; the sequence is GTEKRIKFRR…CNGTGTIVVD (82 aa). Zn(2+) contacts are provided by Cys152, Cys155, Cys168, Cys171, Cys194, Cys197, Cys208, and Cys211. CXXCXGXG motif repeat units lie at residues 152 to 159, 168 to 175, 194 to 201, and 208 to 215; these read CPDCKGTG, CPTCHGTG, CNTCGGKG, and CPRCNGTG.

Belongs to the DnaJ family. In terms of assembly, homodimer. Zn(2+) serves as cofactor.

Its subcellular location is the cytoplasm. Its function is as follows. Participates actively in the response to hyperosmotic and heat shock by preventing the aggregation of stress-denatured proteins and by disaggregating proteins, also in an autonomous, DnaK-independent fashion. Unfolded proteins bind initially to DnaJ; upon interaction with the DnaJ-bound protein, DnaK hydrolyzes its bound ATP, resulting in the formation of a stable complex. GrpE releases ADP from DnaK; ATP binding to DnaK triggers the release of the substrate protein, thus completing the reaction cycle. Several rounds of ATP-dependent interactions between DnaJ, DnaK and GrpE are required for fully efficient folding. Also involved, together with DnaK and GrpE, in the DNA replication of plasmids through activation of initiation proteins. In Thermoplasma volcanium (strain ATCC 51530 / DSM 4299 / JCM 9571 / NBRC 15438 / GSS1), this protein is Chaperone protein DnaJ.